A 1367-amino-acid polypeptide reads, in one-letter code: Dynactin, 150 kDa isoform (1367 aa).

The region spanning 28 to 70 is the CAP-Gly domain; it reads GETAFAPGTWVGIELDEPSGKNDGSVQGERYFNCEMGYGMFVR. Residues 76 to 318 form a disordered region; the sequence is VIAQPPPPPP…NLKATTITPR (243 aa). Composition is skewed to low complexity over residues 88-99 and 132-149; these read TFRRSVTTRPTS and PSRT…RSPT. Polar residues predominate over residues 150 to 163; sequence KQLATASSSGNPSR. Composition is skewed to low complexity over residues 164-190 and 243-259; these read SGTP…SRHS and STGS…KRGS. Coiled coils occupy residues 321–598, 637–698, and 1039–1199; these read ITNT…MQEE, LQSD…EAEQ, and AELK…RARL.

Belongs to the dynactin 150 kDa subunit family. In terms of assembly, large macromolecular complex of at least 10 components; p150(glued) binds directly to microtubules and to cytoplasmic dynein.

It localises to the cytoplasm. The protein resides in the cytoskeleton. Functionally, required for the cytoplasmic dynein-driven retrograde movement of vesicles and organelles along microtubules. Dynein-dynactin interaction is a key component of the mechanism of axonal transport of vesicles and organelles. In Neurospora crassa (strain ATCC 24698 / 74-OR23-1A / CBS 708.71 / DSM 1257 / FGSC 987), this protein is Dynactin, 150 kDa isoform (ro-3).